A 109-amino-acid chain; its full sequence is Large ribosomal subunit protein uL22 (109 aa).

The protein belongs to the universal ribosomal protein uL22 family. As to quaternary structure, part of the 50S ribosomal subunit.

Functionally, this protein binds specifically to 23S rRNA; its binding is stimulated by other ribosomal proteins, e.g. L4, L17, and L20. It is important during the early stages of 50S assembly. It makes multiple contacts with different domains of the 23S rRNA in the assembled 50S subunit and ribosome. Its function is as follows. The globular domain of the protein is located near the polypeptide exit tunnel on the outside of the subunit, while an extended beta-hairpin is found that lines the wall of the exit tunnel in the center of the 70S ribosome. This chain is Large ribosomal subunit protein uL22, found in Neisseria gonorrhoeae (strain ATCC 700825 / FA 1090).